The sequence spans 865 residues: Protein translocase subunit SecA (865 aa).

ATP is bound by residues Gln-93, 111–115 (GEGKT), and Asp-501. Positions 841, 843, 852, and 853 each coordinate Zn(2+).

It belongs to the SecA family. As to quaternary structure, monomer and homodimer. Part of the essential Sec protein translocation apparatus which comprises SecA, SecYEG and auxiliary proteins SecDF-YajC and YidC. Zn(2+) is required as a cofactor.

The protein resides in the cell inner membrane. It is found in the cytoplasm. The catalysed reaction is ATP + H2O + cellular proteinSide 1 = ADP + phosphate + cellular proteinSide 2.. Functionally, part of the Sec protein translocase complex. Interacts with the SecYEG preprotein conducting channel. Has a central role in coupling the hydrolysis of ATP to the transfer of proteins into and across the cell membrane, serving as an ATP-driven molecular motor driving the stepwise translocation of polypeptide chains across the membrane. The polypeptide is Protein translocase subunit SecA (Helicobacter pylori (strain J99 / ATCC 700824) (Campylobacter pylori J99)).